We begin with the raw amino-acid sequence, 571 residues long: Leucine aminopeptidase A2, chloroplastic (571 aa).

The transit peptide at 1-42 directs the protein to the chloroplast; sequence MATLRVSSLFASSSSSLHSNPSVFTKYQSSPKWAFSFPVTPL. 2 residues coordinate Mg(2+): Lys342 and Asp347. Lys354 is an active-site residue. Asp367, Asp427, and Glu429 together coordinate Mg(2+). Residue Arg431 is part of the active site.

The protein belongs to the peptidase M17 family. In terms of assembly, homohexamer (dimer of homotrimers). The cofactor is Mg(2+). As to expression, expressed during floral development. Expressed in healthy and senescent leaves, cotyledons (emergence from seed coats), pistils, sepals, petals, stamens, and floral buds (at protein level).

Its subcellular location is the plastid. It is found in the chloroplast. It catalyses the reaction Release of an N-terminal amino acid, Xaa-|-Yaa-, in which Xaa is preferably Leu, but may be other amino acids including Pro although not Arg or Lys, and Yaa may be Pro. Amino acid amides and methyl esters are also readily hydrolyzed, but rates on arylamides are exceedingly low.. The catalysed reaction is Release of N-terminal proline from a peptide.. Functionally, catalyzes the removal of unsubstituted N-terminal amino acids from various peptides. When associated as homohexamer, catalyzes the proteolyzes of Xaa-Leu dipeptides. Possesses leucine aminopeptidase activity against the model substrate leucine-amido methyl coumarin. Presumably involved in the processing and regular turnover of intracellular proteins. Regulates wound signaling and has a role in insect defense. Its function is as follows. Functions as a molecular chaperone to protect proteins from heat-induced damage. The chain is Leucine aminopeptidase A2, chloroplastic from Solanum lycopersicum (Tomato).